Here is a 354-residue protein sequence, read N- to C-terminus: Probable butyrate kinase (354 aa).

The protein belongs to the acetokinase family.

The protein localises to the cytoplasm. It carries out the reaction butanoate + ATP = butanoyl phosphate + ADP. The polypeptide is Probable butyrate kinase (Phocaeicola vulgatus (strain ATCC 8482 / DSM 1447 / JCM 5826 / CCUG 4940 / NBRC 14291 / NCTC 11154) (Bacteroides vulgatus)).